Consider the following 220-residue polypeptide: Tumor protein D54 (220 aa).

Met1 carries the post-translational modification N-acetylmethionine. 3 positions are modified to phosphoserine: Ser3, Ser12, and Ser19. Residues 40-82 (GLTEGEEEELRAELAKVEEEIVTLRQVLAAKERHCGELKRRLG) are a coiled coil. Phosphoserine is present on residues Ser96, Ser149, Ser168, and Ser175. Residue Thr177 is modified to Phosphothreonine. Ser180 carries the post-translational modification Phosphoserine. Thr187 bears the Phosphothreonine mark. The disordered stretch occupies residues 189 to 220 (KSKVVGGRENGSDNLPPSPGSGDQTLPDHAPF). Phosphoserine occurs at positions 206 and 209.

Belongs to the TPD52 family. In terms of assembly, forms a homodimer or heterodimer with other members of the family. Interacts with MAL2.

The sequence is that of Tumor protein D54 (Tpd52l2) from Mus musculus (Mouse).